A 160-amino-acid polypeptide reads, in one-letter code: MTNIRIGQGYDVHQLTEGRKLILGGVEIPFEKGLLGHSDADALLHAVTDALLGAAGLGDIGSHFPDTAAEFKDADSRVLLRAAYQSVQAQGWQVVNVDTTVIAQKPKLAPHIPQMRANIAADLGIDISCVNIKGKTNEKLGYLGRMEGIEAQAAVLLVRI.

Aspartate 11 and histidine 13 together coordinate a divalent metal cation. Residues 11–13 and 37–38 each bind 4-CDP-2-C-methyl-D-erythritol 2-phosphate; these read DVH and HS. A divalent metal cation is bound at residue histidine 45. 4-CDP-2-C-methyl-D-erythritol 2-phosphate is bound by residues 59 to 61 and arginine 145; that span reads DIG.

Belongs to the IspF family. Homotrimer. The cofactor is a divalent metal cation.

The enzyme catalyses 4-CDP-2-C-methyl-D-erythritol 2-phosphate = 2-C-methyl-D-erythritol 2,4-cyclic diphosphate + CMP. It participates in isoprenoid biosynthesis; isopentenyl diphosphate biosynthesis via DXP pathway; isopentenyl diphosphate from 1-deoxy-D-xylulose 5-phosphate: step 4/6. Involved in the biosynthesis of isopentenyl diphosphate (IPP) and dimethylallyl diphosphate (DMAPP), two major building blocks of isoprenoid compounds. Catalyzes the conversion of 4-diphosphocytidyl-2-C-methyl-D-erythritol 2-phosphate (CDP-ME2P) to 2-C-methyl-D-erythritol 2,4-cyclodiphosphate (ME-CPP) with a corresponding release of cytidine 5-monophosphate (CMP). This Neisseria gonorrhoeae (strain ATCC 700825 / FA 1090) protein is 2-C-methyl-D-erythritol 2,4-cyclodiphosphate synthase.